The sequence spans 239 residues: UPF0173 metal-dependent hydrolase Dvul_0081 (239 aa).

This sequence belongs to the UPF0173 family.

This is UPF0173 metal-dependent hydrolase Dvul_0081 from Nitratidesulfovibrio vulgaris (strain DP4) (Desulfovibrio vulgaris).